The chain runs to 573 residues: Thiol:disulfide interchange protein DsbD (573 aa).

The first 20 residues, 1-20, serve as a signal peptide directing secretion; that stretch reads MLKRFFLLLSSLLLVCNVQA. Over 21–175 the chain is Periplasmic; the sequence is GLFNNKPQYL…AENLSNNYLS (155 aa). Intrachain disulfides connect C121/C126 and C191/C313. Residues 176-196 traverse the membrane as a helical segment; the sequence is IFGFLLLGIGLAFTPCVLPML. Over 197 to 227 the chain is Cytoplasmic; it reads PLLSAIVIGHKNRPNTSRALLLSFTYVQGMA. The chain crosses the membrane as a helical span at residues 228–248; that stretch reads LTYTLLGLTVAAIGLPFQVAL. At 249-251 the chain is on the periplasmic side; sequence QSP. Residues 252-272 form a helical membrane-spanning segment; sequence AVLISLAVLFTLLAASMFGLF. The Cytoplasmic segment spans residues 273–292; the sequence is EIRLPNTWQQKLNALSQQQQ. The helical transmembrane segment at 293-313 threads the bilayer; that stretch reads GGAVGNVFIMGIIAGLVASPC. At 314–331 the chain is on the periplasmic side; the sequence is TSAPLSGALLYVAQSGNL. Residues 332–352 form a helical membrane-spanning segment; the sequence is LIGGLALYLLALGMGLPLILI. The Cytoplasmic portion of the chain corresponds to 353–365; it reads TVFGNQILPKSGE. Residues 366–386 traverse the membrane as a helical segment; the sequence is WLFKVKTAFGFVMLALPIFLI. Residues 387–393 are Periplasmic-facing; it reads SRILPSH. Residues 394 to 414 traverse the membrane as a helical segment; that stretch reads YEPFLWSTLALAFLGWLISSL. The Cytoplasmic portion of the chain corresponds to 415–425; sequence NYSTMLKQAVR. The helical transmembrane segment at 426–446 threads the bilayer; the sequence is ILLFIAFGLTAYPWANLVWQT. In terms of domain architecture, Thioredoxin spans 440-573; that stretch reads ANLVWQTTSN…NQFLAWLNRL (134 aa). Topologically, residues 447-573 are periplasmic; the sequence is TSNTAQPTTP…NQFLAWLNRL (127 aa). The cysteines at positions 490 and 493 are disulfide-linked.

It belongs to the thioredoxin family. DsbD subfamily.

The protein localises to the cell inner membrane. It catalyses the reaction [protein]-dithiol + NAD(+) = [protein]-disulfide + NADH + H(+). The catalysed reaction is [protein]-dithiol + NADP(+) = [protein]-disulfide + NADPH + H(+). Functionally, required to facilitate the formation of correct disulfide bonds in some periplasmic proteins and for the assembly of the periplasmic c-type cytochromes. Acts by transferring electrons from cytoplasmic thioredoxin to the periplasm. This transfer involves a cascade of disulfide bond formation and reduction steps. The polypeptide is Thiol:disulfide interchange protein DsbD (Haemophilus ducreyi (strain 35000HP / ATCC 700724)).